A 259-amino-acid polypeptide reads, in one-letter code: Ribosomal RNA small subunit methyltransferase J (259 aa).

Residues arginine 101 to aspartate 102, glutamate 117 to arginine 118, serine 153 to serine 154, and aspartate 176 contribute to the S-adenosyl-L-methionine site.

Belongs to the methyltransferase superfamily. RsmJ family.

The protein localises to the cytoplasm. The catalysed reaction is guanosine(1516) in 16S rRNA + S-adenosyl-L-methionine = N(2)-methylguanosine(1516) in 16S rRNA + S-adenosyl-L-homocysteine + H(+). In terms of biological role, specifically methylates the guanosine in position 1516 of 16S rRNA. The protein is Ribosomal RNA small subunit methyltransferase J of Aliivibrio fischeri (strain MJ11) (Vibrio fischeri).